The chain runs to 361 residues: Chalcone synthase A (361 aa).

Residue cysteine 168 is part of the active site.

Belongs to the thiolase-like superfamily. Chalcone/stilbene synthases family.

It carries out the reaction (E)-4-coumaroyl-CoA + 3 malonyl-CoA + 3 H(+) = 2',4,4',6'-tetrahydroxychalcone + 3 CO2 + 4 CoA. It participates in secondary metabolite biosynthesis; flavonoid biosynthesis. Functionally, the primary product of this enzyme is 4,2',4',6'-tetrahydroxychalcone (also termed naringenin-chalcone or chalcone) which can under specific conditions spontaneously isomerize into naringenin. This chain is Chalcone synthase A (CHSA), found in Ipomoea cordatotriloba (Tievine).